Consider the following 63-residue polypeptide: Anaphase-promoting complex subunit 13 (63 aa).

The interval 36–63 (KTDDTEETNQETQQADAETWRDLALDTQ) is disordered. The span at 53-63 (ETWRDLALDTQ) shows a compositional bias: basic and acidic residues.

It belongs to the APC13 family. In terms of assembly, component of the anaphase promoting complex/cyclosome (APC/C) complex. Expressed constitutively in roots, leaves, stems, buds, flowers, and seeds.

Its subcellular location is the nucleus. It functions in the pathway protein modification; protein ubiquitination. In terms of biological role, component of the anaphase promoting complex/cyclosome (APC/C), a cell cycle-regulated E3 ubiquitin ligase that controls progression through mitosis and the G1 phase of the cell cycle. The APC/C complex acts by mediating ubiquitination and subsequent degradation of target proteins. Regulates global growth and development, including phyllotaxis and apical dominance. Required for pollen maturation. Promotes (pri) miRNA transcription of each MIR159 genes. This chain is Anaphase-promoting complex subunit 13, found in Arabidopsis thaliana (Mouse-ear cress).